A 301-amino-acid polypeptide reads, in one-letter code: Large ribosomal subunit protein uL18y (301 aa).

The segment at 247 to 267 (RAEPNHKKTEKSAPKEHKRYN) is disordered. The segment covering 249 to 261 (EPNHKKTEKSAPK) has biased composition (basic and acidic residues).

Belongs to the universal ribosomal protein uL18 family. In terms of assembly, component of the large ribosomal subunit (LSU).

Its subcellular location is the cytoplasm. It is found in the nucleus. It localises to the nucleolus. The protein resides in the nucleoplasm. Component of the ribosome, a large ribonucleoprotein complex responsible for the synthesis of proteins in the cell. The small ribosomal subunit (SSU) binds messenger RNAs (mRNAs) and translates the encoded message by selecting cognate aminoacyl-transfer RNA (tRNA) molecules. The large subunit (LSU) contains the ribosomal catalytic site termed the peptidyl transferase center (PTC), which catalyzes the formation of peptide bonds, thereby polymerizing the amino acids delivered by tRNAs into a polypeptide chain. The nascent polypeptides leave the ribosome through a tunnel in the LSU and interact with protein factors that function in enzymatic processing, targeting, and the membrane insertion of nascent chains at the exit of the ribosomal tunnel. Seems involved in the regulation of cell proliferation. Essential in leaf polarity establishment, probably having a role for translation in leaf dorsoventral patterning to specify leaf adaxial identity. This chain is Large ribosomal subunit protein uL18y, found in Arabidopsis thaliana (Mouse-ear cress).